Consider the following 126-residue polypeptide: Fluoride-specific ion channel FluC (126 aa).

2 helical membrane-spanning segments follow: residues 2-22 (IKSL…RWLL) and 36-56 (GTLV…AYFL). Na(+) is bound by residues glycine 75 and serine 78. The next 2 membrane-spanning stretches (helical) occupy residues 80 to 100 (FSTF…IWAL) and 105 to 125 (VHVI…TILF).

Belongs to the fluoride channel Fluc/FEX (TC 1.A.43) family. Homodimer.

The protein resides in the cell inner membrane. It catalyses the reaction fluoride(in) = fluoride(out). Its activity is regulated as follows. Na(+) is not transported, but it plays an essential structural role and its presence is essential for fluoride channel function. In terms of biological role, fluoride-specific ion channel. Important for reducing fluoride concentration in the cell, thus reducing its toxicity. Is highly specific for fluoride ions and cannot transport chloride ions. This chain is Fluoride-specific ion channel FluC, found in Escherichia coli O1:K1 / APEC.